The sequence spans 205 residues: MSSRKKVLLKVIILGDSGVGKTSLMNQYVNKKFSASYKATIGADFLTREVLVDDRQVTMQLWDTAGQERFQSLGVAFYRGADCCVLVFDVNNSKSFDALDSWRDEFLIQASPRDPDNFPFVVLGNKIDVEESKRVISTKRAMTFCQSKGGIPYFETSAKEAINVEQAFEVIARNALAQEESEEFSGDFQDPINIHIDNDRDGCAC.

GTP is bound by residues 17–23 (SGVGKTS), 33–40 (FSASYKAT), Gly-66, 125–128 (NKID), and 157–159 (SAK). Positions 37-45 (YKATIGADF) match the Effector region motif. S-geranylgeranyl cysteine attachment occurs at residues Cys-203 and Cys-205. Cys-205 bears the Cysteine methyl ester mark.

This sequence belongs to the small GTPase superfamily. Rab family. As to quaternary structure, interacts with the Rab GDP dissociation inhibitor GDI1.

It is found in the vacuole. With respect to regulation, rab activation is generally mediated by a guanine exchange factor (GEF), while inactivation through hydrolysis of bound GTP is catalyzed by a GTPase activating protein (GAP). Its function is as follows. Ypt/Rab-type GTPases are key regulators of membrane trafficking and intracellular vesicular transport. They act as molecular switches that convert between GTP-bound and GDP-bound states, and regulate virtually all steps of membrane traffic from the formation of the transport vesicle at the donor membrane to its fusion at the target membrane. In the GDP-bound state, Ypt proteins are predominantly cytosolic, solubilized through the interaction with a GDP dissociation inhibitor (GDI). In the GTP-bound state, the proteins are membrane bound and interact with specific effector proteins that select cargo, promote vesicle movement, or verify the correct site of fusion. Required for fungal morphogenesis, vacuole fusion, autophagy, stress resistance and pathogenicity. This is Ypt/Rab-type GTPase ypt7 from Pyricularia oryzae (strain 70-15 / ATCC MYA-4617 / FGSC 8958) (Rice blast fungus).